The sequence spans 326 residues: CRISPR-associated endonuclease Cas1 (326 aa).

Positions 191, 255, and 269 each coordinate Mn(2+).

It belongs to the CRISPR-associated endonuclease Cas1 family. As to quaternary structure, homodimer. Interacts with Cas3, in the absence of crRNA. It depends on Mg(2+) as a cofactor. Mn(2+) is required as a cofactor.

CRISPR (clustered regularly interspaced short palindromic repeat), is an adaptive immune system that provides protection against mobile genetic elements (viruses, transposable elements and conjugative plasmids). CRISPR clusters contain sequences complementary to antecedent mobile elements and target invading nucleic acids. CRISPR clusters are transcribed and processed into CRISPR RNA (crRNA). Acts as a dsDNA endonuclease. Involved in the integration of spacer DNA into the CRISPR cassette. In Pectobacterium atrosepticum (strain SCRI 1043 / ATCC BAA-672) (Erwinia carotovora subsp. atroseptica), this protein is CRISPR-associated endonuclease Cas1.